The following is a 271-amino-acid chain: uncharacterized protein (271 aa).

This sequence belongs to the HAD-like hydrolase superfamily.

This is an uncharacterized protein from Staphylococcus aureus.